Consider the following 453-residue polypeptide: Ethanolamine ammonia-lyase large subunit (453 aa).

Substrate contacts are provided by residues 160-162 and Asn193; that span reads RLQ. 2 residues coordinate adenosylcob(III)alamin: Pro194 and Gln246. Glu287 lines the substrate pocket. Ser295 contributes to the adenosylcob(III)alamin binding site. Asp362 is a binding site for substrate. Met401 contacts adenosylcob(III)alamin.

Belongs to the EutB family. As to quaternary structure, the basic unit is a heterodimer which dimerizes to form tetramers. The heterotetramers trimerize; 6 large subunits form a core ring with 6 small subunits projecting outwards. Adenosylcob(III)alamin serves as cofactor.

The protein resides in the bacterial microcompartment. The enzyme catalyses ethanolamine = acetaldehyde + NH4(+). It functions in the pathway amine and polyamine degradation; ethanolamine degradation. Its function is as follows. Catalyzes the deamination of various vicinal amino-alcohols to oxo compounds. It is spontaneously inactivated by its substrate and reactivated by EutA. May play a role in BMC assembly or maintenance. Expression of the eut operon allows this bacteria to use ethanolamine (EA) as a carbon, nitrogen and energy source. It relies on cobalamin (vitamin B12) both as a cofactor for the ethanolamine ammonia-lyase activity and to induce the operon. EA enhances bacterial survival in macrophages in a concentration-dependent manner, suggesting it is an important nutrient during infection. The sequence is that of Ethanolamine ammonia-lyase large subunit from Salmonella typhimurium (strain LT2 / SGSC1412 / ATCC 700720).